The primary structure comprises 439 residues: Ribosomal protein uS12 methylthiotransferase RimO (439 aa).

Residues 7–119 form the MTTase N-terminal domain; that stretch reads KQLCLISLGC…IDILIAKKQN (113 aa). [4Fe-4S] cluster-binding residues include Cys-16, Cys-50, Cys-82, Cys-151, Cys-155, and Cys-158. The 232-residue stretch at 137 to 368 folds into the Radical SAM core domain; that stretch reads TGSSVHAYVK…ALKHQNHSFK (232 aa).

The protein belongs to the methylthiotransferase family. RimO subfamily. The cofactor is [4Fe-4S] cluster.

It is found in the cytoplasm. It catalyses the reaction L-aspartate(89)-[ribosomal protein uS12]-hydrogen + (sulfur carrier)-SH + AH2 + 2 S-adenosyl-L-methionine = 3-methylsulfanyl-L-aspartate(89)-[ribosomal protein uS12]-hydrogen + (sulfur carrier)-H + 5'-deoxyadenosine + L-methionine + A + S-adenosyl-L-homocysteine + 2 H(+). Catalyzes the methylthiolation of an aspartic acid residue of ribosomal protein uS12. In Helicobacter pylori (strain J99 / ATCC 700824) (Campylobacter pylori J99), this protein is Ribosomal protein uS12 methylthiotransferase RimO.